The chain runs to 279 residues: Acetylglutamate kinase (279 aa).

Residues 64–65, R86, and N177 each bind substrate; that span reads GG.

It belongs to the acetylglutamate kinase family. ArgB subfamily.

It is found in the cytoplasm. It carries out the reaction N-acetyl-L-glutamate + ATP = N-acetyl-L-glutamyl 5-phosphate + ADP. It functions in the pathway amino-acid biosynthesis; L-arginine biosynthesis; N(2)-acetyl-L-ornithine from L-glutamate: step 2/4. Its function is as follows. Catalyzes the ATP-dependent phosphorylation of N-acetyl-L-glutamate. This is Acetylglutamate kinase from Campylobacter jejuni subsp. doylei (strain ATCC BAA-1458 / RM4099 / 269.97).